The primary structure comprises 147 residues: MSELIVNVINGPNLGRLGRREPAVYGGTTHDELVALIEREAAELGLKAVVRQSDSEAQLLDWIHQAADAAEPVILNAGGLTHTSVALRDACAELSAPLIEVHISNVHAREEFRRHSYLSPIATGVIVGLGIQGYLLALRYLAEHVGT.

Tyrosine 25 acts as the Proton acceptor in catalysis. Residues asparagine 76, histidine 82, and aspartate 89 each coordinate substrate. Histidine 102 (proton donor) is an active-site residue. Substrate contacts are provided by residues 103 to 104 and arginine 113; that span reads IS.

This sequence belongs to the type-II 3-dehydroquinase family. In terms of assembly, homododecamer.

The enzyme catalyses 3-dehydroquinate = 3-dehydroshikimate + H2O. It functions in the pathway metabolic intermediate biosynthesis; chorismate biosynthesis; chorismate from D-erythrose 4-phosphate and phosphoenolpyruvate: step 3/7. In terms of biological role, catalyzes a trans-dehydration via an enolate intermediate. The protein is 3-dehydroquinate dehydratase of Mycobacterium tuberculosis (strain ATCC 25177 / H37Ra).